The primary structure comprises 377 residues: Alanine dehydrogenase (377 aa).

Substrate contacts are provided by Arg-15 and Lys-74. Catalysis depends on His-95, which acts as the Proton donor/acceptor. NAD(+) contacts are provided by residues Ser-133, Asp-197, Arg-202, Ser-219, 238–239 (VL), 266–269 (VAID), and 304–307 (VGNM). Catalysis depends on Asp-269, which acts as the Proton donor/acceptor.

Belongs to the AlaDH/PNT family. In terms of assembly, homohexamer.

It catalyses the reaction L-alanine + NAD(+) + H2O = pyruvate + NH4(+) + NADH + H(+). It functions in the pathway organosulfur degradation; alkanesulfonate degradation. In terms of biological role, involved in an anaerobic respiration pathway that converts the sulfonate taurine (2-aminoethanesulfonate) to ammonia, acetate and sulfide. Acts as an alanine dehydrogenase that regenerates pyruvate, the amino group acceptor for the taurine--pyruvate aminotransferase enzyme, and liberates ammonia. This chain is Alanine dehydrogenase, found in Bilophila wadsworthia (strain 3_1_6).